Consider the following 177-residue polypeptide: Interleukin-10 (177 aa).

The first 19 residues, 1–19 (MPSSSAVLCCLVFLAGVAA), serve as a signal peptide directing secretion. 2 disulfides stabilise this stretch: cysteine 31–cysteine 127 and cysteine 81–cysteine 133. Asparagine 135 is a glycosylation site (N-linked (GlcNAc...) asparagine).

Belongs to the IL-10 family. In terms of assembly, homodimer. Interacts with IL10RA and IL10RB.

The protein resides in the secreted. Functionally, major immune regulatory cytokine that acts on many cells of the immune system where it has profound anti-inflammatory functions, limiting excessive tissue disruption caused by inflammation. Mechanistically, IL10 binds to its heterotetrameric receptor comprising IL10RA and IL10RB leading to JAK1 and STAT2-mediated phosphorylation of STAT3. In turn, STAT3 translocates to the nucleus where it drives expression of anti-inflammatory mediators. Targets antigen-presenting cells (APCs) such as macrophages and monocytes and inhibits their release of pro-inflammatory cytokines including granulocyte-macrophage colony-stimulating factor /GM-CSF, granulocyte colony-stimulating factor/G-CSF, IL-1 alpha, IL-1 beta, IL-6, IL-8 and TNF-alpha. Also interferes with antigen presentation by reducing the expression of MHC-class II and co-stimulatory molecules, thereby inhibiting their ability to induce T cell activation. In addition, controls the inflammatory response of macrophages by reprogramming essential metabolic pathways including mTOR signaling. The polypeptide is Interleukin-10 (IL10) (Ovis aries (Sheep)).